A 262-amino-acid chain; its full sequence is MWFLVLCLALSLGGTGAAPPIQSRIVGGWECEQHSQPWQAALYHFSTFQCGGILVHRQWVLTAAHCISDNYQLWLGRHNLFDDENTAQFVHVSESFPHPGFNMSLLENHTRQADEDYSHDLMLLRLTEPADTITDAVKVVELPTEEPEVGSTCLASGWGSIEPENFSFPDDLQCVDLKILPNDECKKAHVQKVTDFMLCVGHLEGGKDTCVGDSGGPLMCDGVLQGVTSWGYVPCGTPNKPSVAVRVLSYVKWIEDTIAENS.

The signal sequence occupies residues 1–18; the sequence is MWFLVLCLALSLGGTGAA. The propeptide at 19 to 24 is activation peptide; sequence PPIQSR. Positions 25-259 constitute a Peptidase S1 domain; it reads IVGGWECEQH…YVKWIEDTIA (235 aa). Cystine bridges form between C31–C174, C50–C66, C153–C220, C185–C199, and C210–C235. The active-site Charge relay system is H65. Residue S93 is glycosylated (O-linked (GalNAc...) serine). N-linked (GlcNAc...) asparagine glycosylation is present at N102. S104 carries O-linked (GalNAc...) serine glycosylation. N108 carries N-linked (GlcNAc...) asparagine glycosylation. D120 acts as the Charge relay system in catalysis. N-linked (GlcNAc...) asparagine; partial glycosylation is present at N165. O-linked (GalNAc...) serine glycosylation occurs at S167. S214 functions as the Charge relay system in the catalytic mechanism.

The protein belongs to the peptidase S1 family. Kallikrein subfamily. In terms of processing, the O-linked polysaccharides on Ser-93, Ser-104 and Ser-167 are probably the mucin type linked to GalNAc. In PubMed:3163150, GalNAc was detected with the corresponding peptides but not located. In terms of tissue distribution, isoform 2 is expressed in pancreas, salivary glands, kidney, colon, prostate gland, testis, spleen and the colon adenocarcinoma cell line T84.

It carries out the reaction Preferential cleavage of Arg-|-Xaa bonds in small molecule substrates. Highly selective action to release kallidin (lysyl-bradykinin) from kininogen involves hydrolysis of Met-|-Xaa or Leu-|-Xaa.. Its function is as follows. Glandular kallikreins cleave Met-Lys and Arg-Ser bonds in kininogen to release Lys-bradykinin. In terms of biological role, (Microbial infection) Cleaves Neisseria meningitidis NHBA in saliva; Neisseria is an obligate commensal of the nasopharyngeal mucosa. The polypeptide is Kallikrein-1 (KLK1) (Homo sapiens (Human)).